A 485-amino-acid chain; its full sequence is MTTVDNRQDFKVADLSLAEFGRKEITLAEHEMPGLMSIRKEYAEAQPLAGARVTGSLHMTVQTAVLIETLVALGAEVRWASCNIFSTQDHAAAAIAVGPNGTPDNPQGVPVFAWKGETLEEYWWCTEQALTWPNTPTGGPNMILDDGGDATLLVHKGVEYEKDGKVPSVDTAESDEHRVILELLHRTITDGSQKWTQLASEIRGVTEETTTGVHRLYEMHRDGTLLFPAINVNDAVTKSKFDNKYGCRHSLIDGINRATDVLIGGKTAVVCGYGDVGKGCAESLRGQGARVIVTEIDPICALQAAMDGYQVTTLDEVIDKADIFVTTTGNKDIIMASDMAKMKHQAIVGNIGHFDNEIDMAGLAQIPGIVKDEVKPQVHTWKFPDGKVLIVLSEGRLLNLGNATGHPSFVMSNSFADQTLAQIELFTKPDEYPTDVYVLPKHLDEKVARLHLDSLGVKLTTLRPEQAAYIGVEVEGPFKSDHYRY.

3 residues coordinate substrate: Thr60, Asp146, and Glu208. 209 to 211 is an NAD(+) binding site; sequence TTT. The substrate site is built by Lys238 and Asp242. Residues Asn243, 272 to 277, Glu295, Asn330, 351 to 353, and Asn399 each bind NAD(+); these read GYGDVG and IGH.

This sequence belongs to the adenosylhomocysteinase family. NAD(+) is required as a cofactor.

It localises to the cytoplasm. The enzyme catalyses S-adenosyl-L-homocysteine + H2O = L-homocysteine + adenosine. Its pathway is amino-acid biosynthesis; L-homocysteine biosynthesis; L-homocysteine from S-adenosyl-L-homocysteine: step 1/1. In terms of biological role, may play a key role in the regulation of the intracellular concentration of adenosylhomocysteine. This is Adenosylhomocysteinase from Streptomyces avermitilis (strain ATCC 31267 / DSM 46492 / JCM 5070 / NBRC 14893 / NCIMB 12804 / NRRL 8165 / MA-4680).